The chain runs to 237 residues: MARQNFLGLVVSQGKMQKTVKVRVETKVFNKKINKELFHRRDYLVHDEGEISREGDLVRIEATRPLSKRKFFAIAEIIRNKGQQFALYESEAQLSVAKEEAQKAKEFLDKRSVRENKLNEKTTLLRDIRTIQDALSSGSTPKELLEIKQRYGIQDFSQETVRQLLQLDISGLEVNLEKQRSLIDRIQTRLSELLSNDLKCDQFLKDHGVEDPLTLKKNIKKNLLRKHVMMDMQQPSQ.

It belongs to the universal ribosomal protein uS17 family. Component of the mitochondrial small ribosomal subunit (mt-SSU). Mature yeast 74S mitochondrial ribosomes consist of a small (37S) and a large (54S) subunit. The 37S small subunit contains a 15S ribosomal RNA (15S mt-rRNA) and 34 different proteins. The 54S large subunit contains a 21S rRNA (21S mt-rRNA) and 46 different proteins.

The protein resides in the mitochondrion. In terms of biological role, component of the mitochondrial ribosome (mitoribosome), a dedicated translation machinery responsible for the synthesis of mitochondrial genome-encoded proteins, including at least some of the essential transmembrane subunits of the mitochondrial respiratory chain. The mitoribosomes are attached to the mitochondrial inner membrane and translation products are cotranslationally integrated into the membrane. uS17m may have a meiosis-specific role as it accumulates during the middle stage of sporulation. The sequence is that of Small ribosomal subunit protein uS17m (MRPS17) from Saccharomyces cerevisiae (strain ATCC 204508 / S288c) (Baker's yeast).